The sequence spans 1286 residues: Lysine-specific demethylase JMJ705 (1286 aa).

The 42-residue stretch at 25 to 66 folds into the JmjN domain; sequence APEFRPTAAEFADPVSYILKIEPAAAPYGICKVVPPLPPPPK. Residues 82-105 are disordered; sequence PDDRSPSFPTRHQQVGLCPRRTRP. A JmjC domain is found at 201–367; that stretch reads ETAWNMRGVA…IAKEAAIRRA (167 aa). Fe cation contacts are provided by His-244, Glu-246, and His-335. The segment covering 641–679 has biased composition (polar residues); it reads PNSSNNVGCVGTKLSSSSTERQERPSSQNAHCNGSSVIS. Disordered stretches follow at residues 641 to 686, 1013 to 1060, and 1077 to 1164; these read PNSS…KGVR, AEPV…HSQE, and PAGT…PKQA. The span at 1119 to 1136 shows a compositional bias: polar residues; the sequence is HASGQKSNVQEANANSAS. Residues 1167-1189 form a C2H2-type 1; degenerate zinc finger; sequence YSCDIEGCSMSFRTKRDLSLHKS. 3 consecutive C2H2-type zinc fingers follow at residues 1190-1214, 1220-1244, and 1250-1276; these read DICPVKGCGKKFFSHKYLLQHRKVH, LTCPWKGCNMAFKWPWARTEHLRVH, and YVCHEPGCAQTFRFVSDFSRHKRKTGH.

Fe(2+) serves as cofactor. In terms of tissue distribution, expressed in leaves and flag leaves. Expressed at low levels in roots, shoots, stems and panicles.

Its subcellular location is the nucleus. The catalysed reaction is N(6),N(6),N(6)-trimethyl-L-lysyl(27)-[histone H3] + 2 2-oxoglutarate + 2 O2 = N(6)-methyl-L-lysyl(27)-[histone H3] + 2 formaldehyde + 2 succinate + 2 CO2. In terms of biological role, histone demethylase that demethylates 'Lys-27' (H3K27me) of histone H3 with a specific activity for H3K27me3 and H3K27me2. No activity on H3K4me3, H3K9me3, H3K27me1 and H3K36me3. Involved in biotic stress response. May demethylate H3K27me3-marked defense-related genes and increase their basal and induced expression levels during pathogen infection. The chain is Lysine-specific demethylase JMJ705 (JMJ705) from Oryza sativa subsp. japonica (Rice).